Consider the following 408-residue polypeptide: MEPLISPQPRFRLQPIPENPSSSSSSASITIPRSISNTSFFHEISQERLLLHHQDLEQSVQDDKEDQDSDSDETNRFLSQTRPLHRSRTAPAMVIIKDLRTKPPETKKPSPVSKSIIRQAIFLLIVYLTLGVSIYSFNRDHYSGIETHPVVDALYFCIVTMCTIGYGDIAPLTPWTKIFAVVFVLFGFGFLDILLSGVVNYVLDLQESMILTGIQTRQHHQHHHHHRFSAKDYIIDFEKGRMRIRMKVCLALCVVVLCIGVGALVLHFVEELGFVDSVYLSVMSVTTVGYGDRAFKTLQGRLFAAVWLLVSTLAVARAFLYLAEARIDRRHRKAVKLALNREITVDDLLKADTYQHGFISKSEYIVLKLKEMGKITQKDIDQVVIQFEKLDPNQIGKITLPDLLGDPL.

Disordered regions lie at residues 1–29 (MEPL…SASI) and 58–82 (QSVQ…SQTR). A compositionally biased stretch (low complexity) spans 15–29 (PIPENPSSSSSSASI). At 22 to 115 (SSSSSASITI…TKKPSPVSKS (94 aa)) the chain is on the stromal side. Acidic residues predominate over residues 63–72 (DKEDQDSDSD). A helical transmembrane segment spans residues 116-136 (IIRQAIFLLIVYLTLGVSIYS). Residues 152–171 (DALYFCIVTMCTIGYGDIAP) constitute an intramembrane region (pore-forming). Residues 178–198 (IFAVVFVLFGFGFLDILLSGV) form a helical membrane-spanning segment. Over 199–248 (VNYVLDLQESMILTGIQTRQHHQHHHHHRFSAKDYIIDFEKGRMRIRMKV) the chain is Stromal. The chain crosses the membrane as a helical span at residues 249-269 (CLALCVVVLCIGVGALVLHFV). Residues 276-295 (DSVYLSVMSVTTVGYGDRAF) constitute an intramembrane region (pore-forming). Residues 302–322 (LFAAVWLLVSTLAVARAFLYL) form a helical membrane-spanning segment. Topologically, residues 323–408 (AEARIDRRHR…TLPDLLGDPL (86 aa)) are stromal. EF-hand domains are found at residues 339–374 (LNRE…EMGK) and 378–408 (KDID…GDPL). Residues D352, E363, D391, N393, K397, and D402 each coordinate Ca(2+).

Belongs to the two pore domain potassium channel (TC 1.A.1.7) family. As to quaternary structure, homodimer. In terms of tissue distribution, expressed in hydathodes and the vascular tissues of roots, stems, leaves and flowers.

It localises to the vacuole membrane. In terms of biological role, probable voltage-independent potassium-selective tonoplast ion channel. This chain is Two-pore potassium channel 5 (TPK5), found in Arabidopsis thaliana (Mouse-ear cress).